Reading from the N-terminus, the 37-residue chain is Large ribosomal subunit protein bL36c (37 aa).

The protein belongs to the bacterial ribosomal protein bL36 family.

The protein localises to the plastid. Its subcellular location is the chloroplast. The sequence is that of Large ribosomal subunit protein bL36c from Cyanidioschyzon merolae (strain NIES-3377 / 10D) (Unicellular red alga).